The chain runs to 82 residues: Putative membrane protein insertion efficiency factor (82 aa).

This sequence belongs to the UPF0161 family.

It is found in the cell inner membrane. In terms of biological role, could be involved in insertion of integral membrane proteins into the membrane. This chain is Putative membrane protein insertion efficiency factor, found in Aeromonas salmonicida (strain A449).